The chain runs to 522 residues: Wax ester synthase/diacylglycerol acyltransferase 4 (522 aa).

Positions 1–12 (MEIETRPHISGD) are enriched in basic and acidic residues. Residues 1–20 (MEIETRPHISGDEKEEEQPL) form a disordered region. The Cytoplasmic portion of the chain corresponds to 1–205 (MEIETRPHIS…SDSRLLWLVK (205 aa)). The active-site Proton acceptor is the His149. A helical transmembrane segment spans residues 206 to 226 (VIWTAVILGLNTVCDALEFIV). Residues 227-522 (TTLFVKDTET…QIAGLLYRML (296 aa)) are Lumenal-facing. N-linked (GlcNAc...) asparagine glycans are attached at residues Asn270 and Asn409.

It in the N-terminal section; belongs to the long-chain O-acyltransferase family. In terms of tissue distribution, mostly expressed in roots, flowers and siliques.

It localises to the cell membrane. Its subcellular location is the endoplasmic reticulum membrane. It carries out the reaction an acyl-CoA + a 1,2-diacyl-sn-glycerol = a triacyl-sn-glycerol + CoA. It catalyses the reaction a long chain fatty alcohol + a fatty acyl-CoA = a wax ester + CoA. Its pathway is glycerolipid metabolism; triacylglycerol biosynthesis. The protein operates within lipid metabolism. Functionally, bifunctional wax ester synthase/diacylglycerol acyltransferase. Involved in cuticular wax biosynthesis. The polypeptide is Wax ester synthase/diacylglycerol acyltransferase 4 (Arabidopsis thaliana (Mouse-ear cress)).